Consider the following 203-residue polypeptide: Ras-related protein Rab-8B (203 aa).

GTP contacts are provided by residues 22 to 29 (GDSGVGKS), 70 to 74 (DTAGQ), and 128 to 131 (NKCD). Residues Cys-202 and Cys-203 are each lipidated (S-geranylgeranyl cysteine).

The protein belongs to the small GTPase superfamily. Rab family.

It is found in the cell membrane. Protein transport. Probably involved in vesicular traffic. This Dictyostelium discoideum (Social amoeba) protein is Ras-related protein Rab-8B (rab8B).